The chain runs to 254 residues: Pimeloyl-[acyl-carrier protein] methyl ester esterase (254 aa).

Residues Trp20, 80–81 (SL), and 141–145 (FLALQ) contribute to the substrate site. Ser80 functions as the Nucleophile in the catalytic mechanism. Residues Asp205 and His233 contribute to the active site. A substrate-binding site is contributed by His233.

Belongs to the AB hydrolase superfamily. Carboxylesterase BioH family. In terms of assembly, monomer.

Its subcellular location is the cytoplasm. It catalyses the reaction 6-carboxyhexanoyl-[ACP] methyl ester + H2O = 6-carboxyhexanoyl-[ACP] + methanol + H(+). It participates in cofactor biosynthesis; biotin biosynthesis. In terms of biological role, the physiological role of BioH is to remove the methyl group introduced by BioC when the pimeloyl moiety is complete. It allows to synthesize pimeloyl-ACP via the fatty acid synthetic pathway through the hydrolysis of the ester bonds of pimeloyl-ACP esters. In Methylococcus capsulatus (strain ATCC 33009 / NCIMB 11132 / Bath), this protein is Pimeloyl-[acyl-carrier protein] methyl ester esterase.